A 356-amino-acid polypeptide reads, in one-letter code: Nicotinate-nucleotide--dimethylbenzimidazole phosphoribosyltransferase (356 aa).

The active-site Proton acceptor is the Glu-317.

Belongs to the CobT family. As to quaternary structure, homodimer.

The enzyme catalyses 5,6-dimethylbenzimidazole + nicotinate beta-D-ribonucleotide = alpha-ribazole 5'-phosphate + nicotinate + H(+). Its pathway is nucleoside biosynthesis; alpha-ribazole biosynthesis; alpha-ribazole from 5,6-dimethylbenzimidazole: step 1/2. Its function is as follows. Catalyzes the synthesis of alpha-ribazole-5'-phosphate from nicotinate mononucleotide (NAMN) and 5,6-dimethylbenzimidazole (DMB). In Salmonella dublin (strain CT_02021853), this protein is Nicotinate-nucleotide--dimethylbenzimidazole phosphoribosyltransferase.